Here is a 387-residue protein sequence, read N- to C-terminus: Polyphosphate kinase (387 aa).

Residues Arg-347 and Arg-377 each contribute to the Mg(2+) site.

It belongs to the polyphosphate kinase 1 (PPK1) family. Mg(2+) is required as a cofactor. An intermediate of this reaction is the autophosphorylated ppk in which a phosphate is covalently linked to a histidine residue through a N-P bond.

It carries out the reaction [phosphate](n) + ATP = [phosphate](n+1) + ADP. In terms of biological role, catalyzes the reversible transfer of the terminal phosphate of ATP to form a long-chain polyphosphate (polyP). This Aphanizomenon baltica protein is Polyphosphate kinase (ppk).